We begin with the raw amino-acid sequence, 562 residues long: Arginine--tRNA ligase 1 (562 aa).

Positions 122–132 (PNIAKPFSMGH) match the 'HIGH' region motif.

It belongs to the class-I aminoacyl-tRNA synthetase family. Monomer.

It is found in the cytoplasm. The catalysed reaction is tRNA(Arg) + L-arginine + ATP = L-arginyl-tRNA(Arg) + AMP + diphosphate. The polypeptide is Arginine--tRNA ligase 1 (Bacillus thuringiensis subsp. konkukian (strain 97-27)).